The following is a 188-amino-acid chain: Elongation factor P-like protein (188 aa).

Belongs to the elongation factor P family.

This Aliivibrio fischeri (strain ATCC 700601 / ES114) (Vibrio fischeri) protein is Elongation factor P-like protein.